Here is a 477-residue protein sequence, read N- to C-terminus: Probable cytosolic Fe-S cluster assembly factor GK14772 (477 aa).

Residues Cys-23, Cys-69, Cys-72, Cys-75, Cys-188, Cys-244, Cys-396, and Cys-400 each coordinate [4Fe-4S] cluster.

The protein belongs to the NARF family.

In terms of biological role, component of the cytosolic iron-sulfur (Fe/S) protein assembly machinery. Required for maturation of extramitochondrial Fe/S proteins. In Drosophila willistoni (Fruit fly), this protein is Probable cytosolic Fe-S cluster assembly factor GK14772.